The chain runs to 115 residues: UPF0738 protein SE_0694 (115 aa).

The protein belongs to the UPF0738 family.

This Staphylococcus epidermidis (strain ATCC 12228 / FDA PCI 1200) protein is UPF0738 protein SE_0694.